Reading from the N-terminus, the 321-residue chain is MKIRAHHKIATAAACVALLASACSGSDKPQSTTAEGFPETITLAAIPAENSSDLKASYDPLIKMLEKQTGSKVEFVQASDYAGVVEGMIAGNVDLAFFGPFAYVVAGVNGAKMTPLGAVIKDEGGAPGYQSYGLARADEDNINGLKDFAGKKVCFVDPGSTSGFLYPTAGLIEEGVVKSGSEADISAAMSPIFAGGHDSSALAIANGDCDAGFAFDTMVDKTMIDKGDLKPGQLKTVWKSDMIAGSVFAANDALGPEVIDKLKTMFAQDANVKSFEEEGFCEGDACRITDERAWGVVPVTDADYDGVRHVCDVTGSEKCKG.

Positions methionine 1–alanine 22 are cleaved as a signal peptide. Residue cysteine 23 is the site of N-palmitoyl cysteine attachment. Cysteine 23 carries the S-diacylglycerol cysteine lipid modification.

The protein belongs to the phosphate/phosphite/phosphonate binding protein family. As to quaternary structure, the complex is composed of two ATP-binding proteins (PhnC), two transmembrane proteins (PhnE) and a solute-binding protein (PhnD).

The protein resides in the cell membrane. Its function is as follows. Part of the ABC transporter complex PhnCDE involved in phosphate import. Responsible for phosphate binding. This is Phosphate-import protein PhnD (phnD) from Mycolicibacterium smegmatis (strain ATCC 700084 / mc(2)155) (Mycobacterium smegmatis).